Here is a 417-residue protein sequence, read N- to C-terminus: UDP-N-acetylglucosamine 1-carboxyvinyltransferase 2 (417 aa).

22-23 (KN) contributes to the phosphoenolpyruvate binding site. Arginine 94 contributes to the UDP-N-acetyl-alpha-D-glucosamine binding site. Residue cysteine 118 is the Proton donor of the active site. Cysteine 118 is modified (2-(S-cysteinyl)pyruvic acid O-phosphothioketal). Residues 123 to 127 (RPIDL), aspartate 306, and isoleucine 328 each bind UDP-N-acetyl-alpha-D-glucosamine.

The protein belongs to the EPSP synthase family. MurA subfamily.

The protein resides in the cytoplasm. The catalysed reaction is phosphoenolpyruvate + UDP-N-acetyl-alpha-D-glucosamine = UDP-N-acetyl-3-O-(1-carboxyvinyl)-alpha-D-glucosamine + phosphate. Its pathway is cell wall biogenesis; peptidoglycan biosynthesis. Cell wall formation. Adds enolpyruvyl to UDP-N-acetylglucosamine. The protein is UDP-N-acetylglucosamine 1-carboxyvinyltransferase 2 of Clostridium tetani (strain Massachusetts / E88).